The following is a 344-amino-acid chain: Arylacetonitrilase (344 aa).

One can recognise a CN hydrolase domain in the interval Leu-5–Leu-290. Catalysis depends on Glu-45, which acts as the Proton acceptor. Residue Lys-126 is part of the active site. Cys-167 serves as the catalytic Nucleophile. Residues Val-324–Glu-344 form a disordered region.

This sequence belongs to the carbon-nitrogen hydrolase superfamily. Nitrilase family.

The enzyme catalyses a nitrile + 2 H2O = a carboxylate + NH4(+). It catalyses the reaction 4-chlorophenylacetonitrile + 2 H2O = 4-chlorophenylacetate + NH4(+). Functionally, nitrilase that hydrolyzes preferentially phenylacetonitrile and (R,S)-mandelonitrile. Also acts on dinitriles like phenylenediacetonitriles (PDAs) 1,2-PDA, 1,3-PDA, and 1,4-PDA, and cyanophenyl acetonitriles (CPAs) 2-CPA and 4-CPA. This chain is Arylacetonitrilase, found in Macrophomina phaseolina (strain MS6) (Charcoal rot fungus).